Reading from the N-terminus, the 121-residue chain is Piercer of microtubule wall 2 protein (121 aa).

The segment covering 1-10 (MTDRNRDKKS) has biased composition (basic and acidic residues). Residues 1–29 (MTDRNRDKKSTSPSNSDTEMKSEQLPPCV) form a disordered region.

The protein belongs to the PIERCE2 family. In terms of assembly, microtubule inner protein component of sperm flagellar doublet microtubules. Interacts with CFAP53, ODAD1 and ODAD3; the interactions link the outer dynein arms docking complex (ODA-DC) to the internal microtubule inner proteins (MIP) in cilium axoneme. In terms of tissue distribution, expressed in airway epithelial cells.

Its subcellular location is the cytoplasm. It localises to the cytoskeleton. The protein localises to the cilium axoneme. It is found in the flagellum axoneme. In terms of biological role, microtubule inner protein involved in the attachment of outer dynein arms (ODAs) to dynein-decorated doublet microtubules (DMTs) in cilia axoneme, which is required for motile cilia beating. The chain is Piercer of microtubule wall 2 protein from Homo sapiens (Human).